A 505-amino-acid chain; its full sequence is MADFVAAIDQGTTSTRCMIFDHDGAEVGRHQLEHEQILPRAGWVEHNPVEIWERTGSVLATALNKTKLSTSDLVALGITNQRETSLVWNRHTGRPYYNAIVWQDTRTDRIASALDRDGRGDVIRQKAGLPPATYFSGGKLQWLLENVDGLRADAEKGDALFGTTDTWVLWNLTGGHRGGVHVTDVTNASRTMLMNLETLDWDDELLGFFDIPRQMLPEIRPSSSPEPHGVTVDWGPADGEIPVTGILGDQQAAMVGQVCLDAGEAKNTYGTGNFLLLNTGENIVRSKNGLLTTVCYQFGDAKPVYALEGSIAVTGSAVQWLRDQLGIISGAAQSESLARQVEDNGGVYFVPAFSGLFAPYWRSDARGAIVGLSRFNTNAHVARATLEAICYQSRDVVDAMAADSGVHLEVLKVDGGITANDLCMQIQADVLGVDVVRPVVAETTALGAAYAAGLAVGFWDGADDLRANWQEDKRWSPTWSDDQRAAGYAGWRKAVQRTMDWVDVD.

Thr-12 contributes to the ADP binding site. Residues Thr-12, Thr-13, and Ser-14 each coordinate ATP. Thr-12 is a sn-glycerol 3-phosphate binding site. Position 16 (Arg-16) interacts with ADP. Residues Arg-82, Glu-83, Tyr-134, and Asp-249 each coordinate sn-glycerol 3-phosphate. Glycerol is bound by residues Arg-82, Glu-83, Tyr-134, Asp-249, and Gln-250. ADP-binding residues include Thr-271 and Gly-315. ATP-binding residues include Thr-271, Gly-315, Gln-319, and Gly-416. ADP is bound by residues Gly-416 and Asn-420.

The protein belongs to the FGGY kinase family.

The enzyme catalyses glycerol + ATP = sn-glycerol 3-phosphate + ADP + H(+). It functions in the pathway polyol metabolism; glycerol degradation via glycerol kinase pathway; sn-glycerol 3-phosphate from glycerol: step 1/1. Its activity is regulated as follows. Inhibited by fructose 1,6-bisphosphate (FBP). In terms of biological role, key enzyme in the regulation of glycerol uptake and metabolism. Catalyzes the phosphorylation of glycerol to yield sn-glycerol 3-phosphate. The chain is Glycerol kinase from Mycolicibacterium vanbaalenii (strain DSM 7251 / JCM 13017 / BCRC 16820 / KCTC 9966 / NRRL B-24157 / PYR-1) (Mycobacterium vanbaalenii).